A 117-amino-acid polypeptide reads, in one-letter code: Small ribosomal subunit protein bS6 (117 aa).

This sequence belongs to the bacterial ribosomal protein bS6 family.

In terms of biological role, binds together with bS18 to 16S ribosomal RNA. This Porphyromonas gingivalis (strain ATCC BAA-308 / W83) protein is Small ribosomal subunit protein bS6.